The primary structure comprises 1115 residues: Carbamoyl phosphate synthase large chain (1115 aa).

Residues 1–407 (MPRRTDLHHV…ALGKVMRSLE (407 aa)) form a carboxyphosphate synthetic domain region. ATP contacts are provided by R134, R174, G180, G181, E213, I215, E220, G246, V247, H248, Q290, and E304. An ATP-grasp 1 domain is found at 138 to 333 (KDIVAKAGGE…IAKIAAKLAI (196 aa)). Residues Q290, E304, and N306 each contribute to the Mg(2+) site. The Mn(2+) site is built by Q290, E304, and N306. The interval 408–559 (TTRAGFWTAP…ELDPAAETEV (152 aa)) is oligomerization domain. Residues 560–965 (APQTERPKVL…AFAKSQTAAY (406 aa)) are carbamoyl phosphate synthetic domain. An ATP-grasp 2 domain is found at 693–884 (GDLLSAAGLP…LAKACARIML (192 aa)). R729, R768, L770, E775, G800, I801, H802, S803, Q843, and E855 together coordinate ATP. 3 residues coordinate Mg(2+): Q843, E855, and N857. The Mn(2+) site is built by Q843, E855, and N857. The region spanning 966–1113 (GSLPAQGTVF…QELHRVIGGV (148 aa)) is the MGS-like domain. The tract at residues 966–1115 (GSLPAQGTVF…LHRVIGGVER (150 aa)) is allosteric domain.

Belongs to the CarB family. As to quaternary structure, composed of two chains; the small (or glutamine) chain promotes the hydrolysis of glutamine to ammonia, which is used by the large (or ammonia) chain to synthesize carbamoyl phosphate. Tetramer of heterodimers (alpha,beta)4. The cofactor is Mg(2+). Mn(2+) is required as a cofactor.

The catalysed reaction is hydrogencarbonate + L-glutamine + 2 ATP + H2O = carbamoyl phosphate + L-glutamate + 2 ADP + phosphate + 2 H(+). It carries out the reaction hydrogencarbonate + NH4(+) + 2 ATP = carbamoyl phosphate + 2 ADP + phosphate + 2 H(+). It participates in amino-acid biosynthesis; L-arginine biosynthesis; carbamoyl phosphate from bicarbonate: step 1/1. It functions in the pathway pyrimidine metabolism; UMP biosynthesis via de novo pathway; (S)-dihydroorotate from bicarbonate: step 1/3. Functionally, large subunit of the glutamine-dependent carbamoyl phosphate synthetase (CPSase). CPSase catalyzes the formation of carbamoyl phosphate from the ammonia moiety of glutamine, carbonate, and phosphate donated by ATP, constituting the first step of 2 biosynthetic pathways, one leading to arginine and/or urea and the other to pyrimidine nucleotides. The large subunit (synthetase) binds the substrates ammonia (free or transferred from glutamine from the small subunit), hydrogencarbonate and ATP and carries out an ATP-coupled ligase reaction, activating hydrogencarbonate by forming carboxy phosphate which reacts with ammonia to form carbamoyl phosphate. This is Carbamoyl phosphate synthase large chain from Mycobacterium bovis (strain ATCC BAA-935 / AF2122/97).